A 364-amino-acid polypeptide reads, in one-letter code: Delta(7)-sterol 5(6)-desaturase (364 aa).

The next 3 helical transmembrane spans lie at 94-114 (FFSL…ITAS), 142-162 (LAVS…MLEL), and 181-201 (KLLI…YLAH). The 125-residue stretch at 188-312 (TFIFFTDCGI…FTTLWDRLGG (125 aa)) folds into the Fatty acid hydroxylase domain. The Histidine box-1 signature appears at 201–205 (HRWLH). The Histidine box-2 motif lies at 214–218 (HKPHH). A helical membrane pass occupies residues 249–269 (ILPLHKISYLILFTFVNFWSV). Positions 289-293 (HTVHH) match the Histidine box-3 motif.

Belongs to the sterol desaturase family. Fe cation is required as a cofactor.

It is found in the endoplasmic reticulum membrane. The enzyme catalyses a Delta(7)-sterol + 2 Fe(II)-[cytochrome b5] + O2 + 2 H(+) = a Delta(5),Delta(7)-sterol + 2 Fe(III)-[cytochrome b5] + 2 H2O. Its pathway is steroid metabolism; ergosterol biosynthesis; ergosterol from zymosterol: step 3/5. Functionally, catalyzes the introduction of a C-5 double bond in the B ring of ergosterol. May contribute to the regulation of ergosterol biosynthesis. The sequence is that of Delta(7)-sterol 5(6)-desaturase (ERG3) from Candida glabrata (strain ATCC 2001 / BCRC 20586 / JCM 3761 / NBRC 0622 / NRRL Y-65 / CBS 138) (Yeast).